Here is a 611-residue protein sequence, read N- to C-terminus: Leukotriene A-4 hydrolase (611 aa).

Lys-73 carries the N6-acetyllysine modification. A peptide contacts are provided by residues 135-137 (QCQ) and 267-272 (PYGGME). His-296 provides a ligand contact to Zn(2+). The active-site Proton acceptor is Glu-297. Residues His-300 and Glu-319 each coordinate Zn(2+). Lys-337 carries the N6-acetyllysine modification. The active-site Proton donor is the Tyr-384. Lys-414 is modified (N6-acetyllysine). Ser-416 is modified (phosphoserine). 564–566 (RMK) contributes to the a peptide binding site. The residue at position 573 (Lys-573) is an N6-acetyllysine.

This sequence belongs to the peptidase M1 family. As to quaternary structure, monomer. It depends on Zn(2+) as a cofactor. Post-translationally, phosphorylation at Ser-416 inhibits leukotriene-A4 hydrolase activity. Isoform 1 and isoform 2 are expressed in monocytes, lymphocytes, neutrophils, reticulocytes, platelets and fibroblasts.

The protein localises to the cytoplasm. It carries out the reaction leukotriene A4 + H2O = leukotriene B4. It catalyses the reaction (5S,6S)-epoxy-(18R)-hydroxy-(7E,9E,11Z,14Z,16E)-eicosapentaenoate + H2O = resolvin E1. The enzyme catalyses (5S,6S)-epoxy-(18S)-hydroxy-(7E,9E,11Z,14Z,16E)-eicosapentaenoate + H2O = 18S-resolvin E1. The catalysed reaction is Release of the N-terminal residue from a tripeptide.. The protein operates within lipid metabolism; leukotriene B4 biosynthesis. Its activity is regulated as follows. Inhibited by bestatin. The epoxide hydrolase activity is restrained by suicide inactivation that involves binding of LTA4 to Tyr-379. 4-(4-benzylphenyl)thiazol-2-amine (ARM1) selectively inhibits the epoxide hydrolase activity. Functionally, bifunctional zinc metalloenzyme that comprises both epoxide hydrolase (EH) and aminopeptidase activities. Acts as an epoxide hydrolase to catalyze the conversion of LTA4 to the pro-inflammatory mediator leukotriene B4 (LTB4). Also has aminopeptidase activity, with high affinity for N-terminal arginines of various synthetic tripeptides. In addition to its pro-inflammatory EH activity, may also counteract inflammation by its aminopeptidase activity, which inactivates by cleavage another neutrophil attractant, the tripeptide Pro-Gly-Pro (PGP), a bioactive fragment of collagen generated by the action of matrix metalloproteinase-9 (MMP9) and prolylendopeptidase (PREPL). Involved also in the biosynthesis of resolvin E1 and 18S-resolvin E1 from eicosapentaenoic acid, two lipid mediators that show potent anti-inflammatory and pro-resolving actions. This Homo sapiens (Human) protein is Leukotriene A-4 hydrolase (LTA4H).